The primary structure comprises 115 residues: Probable malate:quinone oxidoreductase (115 aa).

Positions 88-115 (QMPAAAPTATAKPAETPREASPQHDMAL) are disordered. Positions 90 to 101 (PAAAPTATAKPA) are enriched in low complexity. Positions 102–115 (ETPREASPQHDMAL) are enriched in basic and acidic residues.

The protein belongs to the MQO family. FAD serves as cofactor.

The enzyme catalyses (S)-malate + a quinone = a quinol + oxaloacetate. It functions in the pathway carbohydrate metabolism; tricarboxylic acid cycle; oxaloacetate from (S)-malate (quinone route): step 1/1. This chain is Probable malate:quinone oxidoreductase (mqo), found in Klebsiella pneumoniae.